We begin with the raw amino-acid sequence, 198 residues long: Myc target protein 1 homolog (198 aa).

Residues 52-72 carry the Bipartite nuclear localization signal motif; it reads RRRASASISPRMPKSSSRRPR. 2 disordered regions span residues 58–83 and 172–198; these read SISPRMPKSSSRRPRSSSHNHALNRS and NNSLRLGPSTQTPPPAYDSIIKAFPDS. Residues 172–181 are compositionally biased toward polar residues; it reads NNSLRLGPST.

This sequence belongs to the MYCT1 family.

The protein resides in the nucleus. In terms of biological role, may regulate certain MYC target genes, MYC seems to be a direct upstream transcriptional activator. The sequence is that of Myc target protein 1 homolog (myct1) from Xenopus tropicalis (Western clawed frog).